A 299-amino-acid chain; its full sequence is Bifunctional protein FolD (299 aa).

NADP(+) is bound by residues 166–168 (GRS), Ser191, and Ile232.

It belongs to the tetrahydrofolate dehydrogenase/cyclohydrolase family. As to quaternary structure, homodimer.

The enzyme catalyses (6R)-5,10-methylene-5,6,7,8-tetrahydrofolate + NADP(+) = (6R)-5,10-methenyltetrahydrofolate + NADPH. The catalysed reaction is (6R)-5,10-methenyltetrahydrofolate + H2O = (6R)-10-formyltetrahydrofolate + H(+). The protein operates within one-carbon metabolism; tetrahydrofolate interconversion. Catalyzes the oxidation of 5,10-methylenetetrahydrofolate to 5,10-methenyltetrahydrofolate and then the hydrolysis of 5,10-methenyltetrahydrofolate to 10-formyltetrahydrofolate. The sequence is that of Bifunctional protein FolD from Anaplasma marginale (strain St. Maries).